The chain runs to 341 residues: uncharacterized protein (341 aa).

The next 10 helical transmembrane spans lie at 10–30 (ALGVVLLLFVVFLWLISSFLT), 42–62 (PFLITYINTGTFVFYLIPWYF), 107–127 (LGFCIIWFAANYFSNSSLGFT), 129–149 (VASFTIISSMSGFFTLGLGTI), 155–175 (FTLSKLLALMASVGGVIIVVT), 192–212 (ALGNAYALLAALLYGCYSVMV), 226–246 (LFFGLVGLFDLILLWPFLIIL), 263–283 (LIVLIINASITFVSDYLWVIA), 290–310 (LLVTVGMSLSIPLALFFDILL), and 313–333 (HYLNFSLILGSLLVFAGFIVV).

Belongs to the TPT transporter family.

It localises to the vacuole membrane. Its subcellular location is the golgi apparatus membrane. This is an uncharacterized protein from Schizosaccharomyces pombe (strain 972 / ATCC 24843) (Fission yeast).